A 396-amino-acid chain; its full sequence is Elongation factor Tu (396 aa).

One can recognise a tr-type G domain in the interval lysine 10–glutamate 206. Positions glycine 19–threonine 26 are G1. Glycine 19 to threonine 26 serves as a coordination point for GTP. Threonine 26 is a Mg(2+) binding site. Residues glycine 60–serine 64 are G2. The segment at aspartate 81 to glycine 84 is G3. GTP is bound by residues aspartate 81–histidine 85 and asparagine 136–aspartate 139. The G4 stretch occupies residues asparagine 136–aspartate 139. A G5 region spans residues serine 174–leucine 176.

It belongs to the TRAFAC class translation factor GTPase superfamily. Classic translation factor GTPase family. EF-Tu/EF-1A subfamily. As to quaternary structure, monomer.

The protein resides in the cytoplasm. The enzyme catalyses GTP + H2O = GDP + phosphate + H(+). GTP hydrolase that promotes the GTP-dependent binding of aminoacyl-tRNA to the A-site of ribosomes during protein biosynthesis. In Granulibacter bethesdensis (strain ATCC BAA-1260 / CGDNIH1), this protein is Elongation factor Tu.